The following is a 141-amino-acid chain: Hemoglobin subunit alpha (141 aa).

The Globin domain occupies 1–141; sequence VLSAADKTHV…VSTVLVSKYR (141 aa). Phosphoserine is present on serine 3. Residue lysine 7 is modified to N6-succinyllysine. A Phosphothreonine modification is found at threonine 8. Lysine 11 is subject to N6-succinyllysine. The residue at position 16 (lysine 16) is an N6-acetyllysine; alternate. Lysine 16 is modified (N6-succinyllysine; alternate). Position 35 is a phosphoserine (serine 35). Lysine 40 bears the N6-succinyllysine mark. Serine 49 carries the post-translational modification Phosphoserine. Histidine 58 contacts O2. Histidine 87 is a heme b binding site. A Phosphoserine modification is found at serine 102. Residue threonine 108 is modified to Phosphothreonine. Serine 124 is modified (phosphoserine). Threonine 134 carries the phosphothreonine modification. Residue serine 138 is modified to Phosphoserine.

The protein belongs to the globin family. Heterotetramer of two alpha chains and two beta chains. Red blood cells.

In terms of biological role, involved in oxygen transport from the lung to the various peripheral tissues. Its function is as follows. Hemopressin acts as an antagonist peptide of the cannabinoid receptor CNR1. Hemopressin-binding efficiently blocks cannabinoid receptor CNR1 and subsequent signaling. This Dasypus novemcinctus (Nine-banded armadillo) protein is Hemoglobin subunit alpha (HBA).